A 428-amino-acid polypeptide reads, in one-letter code: Adenylosuccinate synthetase (428 aa).

GTP contacts are provided by residues Gly12–Lys18 and Gly40–Thr42. The active-site Proton acceptor is the Asp13. 2 residues coordinate Mg(2+): Asp13 and Gly40. Residues Asp13 to Lys16, Asn38 to His41, Thr129, Arg143, Gln224, Thr239, and Arg303 each bind IMP. His41 (proton donor) is an active-site residue. Val299–Arg305 contributes to the substrate binding site. GTP contacts are provided by residues Arg305, Lys331 to Asp333, and Ala410 to Gly412.

It belongs to the adenylosuccinate synthetase family. In terms of assembly, homodimer. Mg(2+) serves as cofactor.

It localises to the cytoplasm. The catalysed reaction is IMP + L-aspartate + GTP = N(6)-(1,2-dicarboxyethyl)-AMP + GDP + phosphate + 2 H(+). It participates in purine metabolism; AMP biosynthesis via de novo pathway; AMP from IMP: step 1/2. Functionally, plays an important role in the de novo pathway of purine nucleotide biosynthesis. Catalyzes the first committed step in the biosynthesis of AMP from IMP. This is Adenylosuccinate synthetase from Francisella tularensis subsp. holarctica (strain FTNF002-00 / FTA).